Consider the following 96-residue polypeptide: Glutamyl-tRNA(Gln) amidotransferase subunit C (96 aa).

This sequence belongs to the GatC family. Heterotrimer of A, B and C subunits.

It catalyses the reaction L-glutamyl-tRNA(Gln) + L-glutamine + ATP + H2O = L-glutaminyl-tRNA(Gln) + L-glutamate + ADP + phosphate + H(+). The enzyme catalyses L-aspartyl-tRNA(Asn) + L-glutamine + ATP + H2O = L-asparaginyl-tRNA(Asn) + L-glutamate + ADP + phosphate + 2 H(+). Allows the formation of correctly charged Asn-tRNA(Asn) or Gln-tRNA(Gln) through the transamidation of misacylated Asp-tRNA(Asn) or Glu-tRNA(Gln) in organisms which lack either or both of asparaginyl-tRNA or glutaminyl-tRNA synthetases. The reaction takes place in the presence of glutamine and ATP through an activated phospho-Asp-tRNA(Asn) or phospho-Glu-tRNA(Gln). This chain is Glutamyl-tRNA(Gln) amidotransferase subunit C, found in Neisseria meningitidis serogroup B (strain ATCC BAA-335 / MC58).